Reading from the N-terminus, the 442-residue chain is Phosphoglucosamine mutase (442 aa).

Ser-98 functions as the Phosphoserine intermediate in the catalytic mechanism. Mg(2+)-binding residues include Ser-98, Asp-236, Asp-238, and Asp-240. Residue Ser-98 is modified to Phosphoserine.

The protein belongs to the phosphohexose mutase family. It depends on Mg(2+) as a cofactor. Post-translationally, activated by phosphorylation.

The enzyme catalyses alpha-D-glucosamine 1-phosphate = D-glucosamine 6-phosphate. Catalyzes the conversion of glucosamine-6-phosphate to glucosamine-1-phosphate. In Natranaerobius thermophilus (strain ATCC BAA-1301 / DSM 18059 / JW/NM-WN-LF), this protein is Phosphoglucosamine mutase.